We begin with the raw amino-acid sequence, 1759 residues long: Collagen alpha-1(IV) chain (1759 aa).

An N-terminal signal peptide occupies residues 1-20 (MSRLSLLGLTAAVVLLSSFC). Residues 21 to 194 (QDRIHVDAAA…PGNSGYPGLK (174 aa)) constitute a propeptide, N-terminal propeptide (7S domain). 6 disordered regions span residues 51-245 (PGFG…GSYP), 269-415 (KGRD…GIDG), 548-596 (AGDP…PGLP), 618-650 (PAGI…GGPG), 666-720 (IDGK…RGIP), and 787-1522 (RGQQ…GTPG). 3 stretches are compositionally biased toward low complexity: residues 104 to 116 (HPGL…LPGL), 140 to 153 (PPGQ…PGRP), and 278 to 293 (PGML…PGLK). Positions 195–1530 (GAKGDPGPYG…PGYPGSPGGW (1336 aa)) are triple-helical region. 3 stretches are compositionally biased toward gly residues: residues 324-345 (GEQG…GEPG), 360-370 (GPLGEGTGEAG), and 379-388 (GVQGGKGLPG). Composition is skewed to low complexity over residues 399–411 (RGPV…PGQP) and 574–595 (MPGA…SPGL). Over residues 833–848 (YPGPNGDAGAAGLPGP) the composition is skewed to low complexity. Over residues 904–913 (GQDGGPGYSG) the composition is skewed to gly residues. 4 stretches are compositionally biased toward low complexity: residues 1037–1047 (YPGQPGDVGYP), 1219–1232 (ENGD…DGQP), 1247–1271 (PGRD…PGQD), and 1281–1309 (QDGY…YGMP). Positions 1310–1319 (GLPGGPGESG) are enriched in gly residues. Residues 1341–1357 (LPGAPGVPGVEGVPGLE) are compositionally biased toward low complexity. Residues 1410–1422 (PRGDDGFPGRDGL) are compositionally biased toward basic and acidic residues. Low complexity-rich tracts occupy residues 1423–1437 (DGLP…LPGP) and 1472–1482 (PPGKAGYPGAP). The segment covering 1495–1504 (GMPGHGGDQG) has biased composition (gly residues). Residues 1535–1759 (GFTFAKHSQT…SRCQVCLKNR (225 aa)) form the Collagen IV NC1 domain. 6 disulfide bridges follow: Cys-1550–Cys-1641, Cys-1583–Cys-1638, Cys-1595–Cys-1601, Cys-1660–Cys-1755, Cys-1694–Cys-1752, and Cys-1706–Cys-1712. Met-1623 participates in a covalent cross-link: S-Lysyl-methionine sulfilimine (Met-Lys) (interchain with K-1741). Residue Lys-1741 forms an S-Lysyl-methionine sulfilimine (Lys-Met) (interchain with M-1623) linkage.

The protein belongs to the type IV collagen family. Trimers of two alpha 1(IV) and one alpha 2(IV) chain. Type IV collagen forms a mesh-like network linked through intermolecular interactions between 7S domains and between NC1 domains. Post-translationally, prolines at the third position of the tripeptide repeating unit (G-X-Y) are hydroxylated in some or all of the chains. Type IV collagens contain numerous cysteine residues which are involved in inter- and intramolecular disulfide bonding. 12 of these, located in the NC1 domain, are conserved in all known type IV collagens. In terms of processing, the trimeric structure of the NC1 domains is stabilized by covalent bonds between Lys and Met residues.

The protein localises to the secreted. It localises to the extracellular space. The protein resides in the extracellular matrix. It is found in the basement membrane. Its function is as follows. Collagen type IV is specific for basement membranes. Required to restrict presynaptic growth at the neuromuscular junctions (NMJ) in late larval stage and in adult motor neurons. May play a role in axon regeneration in embryos following injury in D-type motor neurons. This Caenorhabditis elegans protein is Collagen alpha-1(IV) chain.